The primary structure comprises 849 residues: Dopamine receptor 2 (849 aa).

Residues 1–39 lie on the Extracellular side of the membrane; it reads MEAGETWNVSLEWPPPSLDLSTITQTPSTIVGSGIPLNY. The N-linked (GlcNAc...) asparagine glycan is linked to Asn8. Residues 40-60 traverse the membrane as a helical segment; that stretch reads AGLSLIVIPLITLLGNLLVII. The Cytoplasmic portion of the chain corresponds to 61–70; sequence SVLRYRALQS. A helical transmembrane segment spans residues 71–91; it reads AINFLILGLAVADLLVAIIVM. The Extracellular segment spans residues 92-112; sequence PYAVYVYVTNGDWYLGNLMCD. A disulfide bridge connects residues Cys111 and Cys190. A helical transmembrane segment spans residues 113-133; it reads IYMASDVCCSTASILLLAVIS. The Cytoplasmic segment spans residues 134-155; sequence FDRYRAVSLPIQYSRQSQNVKR. The helical transmembrane segment at 156–176 threads the bilayer; that stretch reads VWTLIAVIWLVSLTLASPMVF. Topologically, residues 177-203 are extracellular; the sequence is GVNVRPPDANPYECRFYNAEFSILSSM. The required for the interaction with gpa-14 stretch occupies residues 183–849; the sequence is PDANPYECRF…HHFSNKQAHV (667 aa). Residues 204-224 form a helical membrane-spanning segment; sequence ISFVIPCFLVLFVYIRIIIAL. Over 225–759 the chain is Cytoplasmic; that stretch reads KKREKAAKMR…QRKEKRATKT (535 aa). Residues 450–515 are disordered; sequence RRSSYADDSQ…NNSRTASITN (66 aa). Residues 457–470 show a composition bias toward low complexity; sequence DSQPTSSQTSSGDG. Basic residues predominate over residues 477–498; it reads GQKRFRNLSRNYSTKHHRKVVK. Residues 501–515 show a composition bias toward polar residues; the sequence is RGNSRNNSRTASITN. A helical transmembrane segment spans residues 760-780; the sequence is LGVVVGVFLVCWVPFFVINIL. Residues 781 to 798 lie on the Extracellular side of the membrane; sequence NAVCILLNKDSCQVGYDL. A helical transmembrane segment spans residues 799 to 819; the sequence is FFYCTWIGYMNSFMNPIIYTI. Over 820-849 the chain is Cytoplasmic; sequence FNTEFRRAFKSIIFGRNSTRHHFSNKQAHV.

It belongs to the G-protein coupled receptor 1 family. In terms of assembly, interacts (via C-terminus) with the G-alpha protein gpa-14; the interaction is direct. Expressed in all dopaminergic neurons. Expressed in neurons around the nerve ring and the posterior side of the body including PDE neurons. In hermaphrodites, expressed in the head and tail ganglia including in the RIA interneuron pair, and in a subset of sublateral interneurons and the PDA neuron in the tail. Expressed in cholinergic SIA neurons. Also expressed in the male tail. In males, expressed in the dorsal spicule protractor, ventral spicule protractor, dorsal spicule retractor and ventral spicule retractor muscles and the sensory post-cloacal sensilla B (PCB) neuron. In males, expressed in the sensory hook neurons HOA.

The protein resides in the cell membrane. In terms of biological role, G-protein coupled receptor which binds to the neurotransmitter dopamine with high affinity leading to the activation of an associated G-protein and downstream signaling pathways. Couples to G-proteins to inhibit adenylate cyclase (AC) activity and cAMP production. Inhibits synaptic vesicle fusion to negatively regulate the release of dopamine at dopaminergic neuron synapses. Antagonizes octopamine signaling in response to food by promoting the dopamine-mediated suppression of crh-1/CREB1 transcription factor activation in cholinergic SIA neurons. This is most likely in association with the G(o)-alpha G-protein subunit goa-1. In association with the G-alpha protein gpa-14, modulates two types of learning behavior: touch habituation and chemosensory associative conditioning. May act partly via tsp-17 to negatively regulate dopamine reuptake transporter dat-1 activity. Plays a role in behavioral plasticity and regulates the decision-making process when conflicting alternatives are present. Promotes male mating behavior by antagonizing acetylcholine signaling to control the protrusions of copulatory spicules from the tail of males during hermaphrodite vulval location. Modulates unc-7 activity at gap junctions to promote inhibitory neuronal signaling transduction between chemosensory and mechanosensory neurons, and thus ensures spicule insertion attempts are confined to the hermaphrodite vulva during copulation. Its function is as follows. G-protein coupled receptor which binds to the neurotransmitter dopamine with high affinity leading to the activation of an associated G-protein and downstream signaling pathways. Couples to G-proteins to inhibit adenylate cyclase (AC) activity and cAMP production. In Caenorhabditis elegans, this protein is Dopamine receptor 2.